Reading from the N-terminus, the 35-residue chain is MSDIN-like toxin proprotein 6 (35 aa).

Positions 1-10 (MSDINGTRLP) are excised as a propeptide. A cross-link (cyclopeptide (Ile-Pro)) is located at residues 11-20 (IPGLIPLGIP). A propeptide spanning residues 21-35 (CVSDDVNPTLTRGER) is cleaved from the precursor.

This sequence belongs to the MSDIN fungal toxin family. In terms of processing, processed by the macrocyclase-peptidase enzyme POPB to yield a toxic cyclic decapeptide. POPB first removes 10 residues from the N-terminus. Conformational trapping of the remaining peptide forces the enzyme to release this intermediate rather than proceed to macrocyclization. The enzyme rebinds the remaining peptide in a different conformation and catalyzes macrocyclization of the N-terminal 10 residues.

Its function is as follows. Probable toxin that belongs to the MSDIN-like toxin family responsible for a large number of food poisoning cases and deaths. The sequence is that of MSDIN-like toxin proprotein 6 from Amanita bisporigera (Destroying angel).